The primary structure comprises 440 residues: Methylthioribose-1-phosphate isomerase (440 aa).

D285 functions as the Proton donor in the catalytic mechanism.

Belongs to the eIF-2B alpha/beta/delta subunits family. MtnA subfamily.

It is found in the cytoplasm. The protein resides in the nucleus. It catalyses the reaction 5-(methylsulfanyl)-alpha-D-ribose 1-phosphate = 5-(methylsulfanyl)-D-ribulose 1-phosphate. It functions in the pathway amino-acid biosynthesis; L-methionine biosynthesis via salvage pathway; L-methionine from S-methyl-5-thio-alpha-D-ribose 1-phosphate: step 1/6. Catalyzes the interconversion of methylthioribose-1-phosphate (MTR-1-P) into methylthioribulose-1-phosphate (MTRu-1-P). The protein is Methylthioribose-1-phosphate isomerase (mri1) of Botryotinia fuckeliana (strain B05.10) (Noble rot fungus).